Consider the following 82-residue polypeptide: Conotoxin Cal30 (82 aa).

The N-terminal stretch at 1-19 is a signal peptide; it reads MEKLIILLLVASLLVTTDS.

May contain 5 disulfide bonds. In terms of tissue distribution, expressed by the venom duct.

The protein localises to the secreted. Functionally, probable neurotoxin. The chain is Conotoxin Cal30 from Californiconus californicus (California cone).